The following is a 438-amino-acid chain: Trigger factor (438 aa).

Positions 160 to 245 (DDKVTIDFVG…VKKIQQAELP (86 aa)) constitute a PPIase FKBP-type domain.

Belongs to the FKBP-type PPIase family. Tig subfamily.

The protein resides in the cytoplasm. It catalyses the reaction [protein]-peptidylproline (omega=180) = [protein]-peptidylproline (omega=0). Functionally, involved in protein export. Acts as a chaperone by maintaining the newly synthesized protein in an open conformation. Functions as a peptidyl-prolyl cis-trans isomerase. This is Trigger factor from Francisella tularensis subsp. novicida (strain U112).